Reading from the N-terminus, the 243-residue chain is Small ribosomal subunit protein eS4 (243 aa).

The S4 RNA-binding domain occupies 43–105; that stretch reads IPLIYIVRDY…TGEHYRVLPN (63 aa).

The protein belongs to the eukaryotic ribosomal protein eS4 family. As to quaternary structure, part of the 30S ribosomal subunit.

This Thermococcus kodakarensis (strain ATCC BAA-918 / JCM 12380 / KOD1) (Pyrococcus kodakaraensis (strain KOD1)) protein is Small ribosomal subunit protein eS4.